The chain runs to 887 residues: Alanine--tRNA ligase (887 aa).

Zn(2+) is bound by residues histidine 564, histidine 568, cysteine 676, and histidine 680. A disordered region spans residues 854–873; it reads GQGGGGRPDMAQSGGPKGNK.

This sequence belongs to the class-II aminoacyl-tRNA synthetase family. Zn(2+) is required as a cofactor.

It localises to the cytoplasm. The catalysed reaction is tRNA(Ala) + L-alanine + ATP = L-alanyl-tRNA(Ala) + AMP + diphosphate. Its function is as follows. Catalyzes the attachment of alanine to tRNA(Ala) in a two-step reaction: alanine is first activated by ATP to form Ala-AMP and then transferred to the acceptor end of tRNA(Ala). Also edits incorrectly charged Ser-tRNA(Ala) and Gly-tRNA(Ala) via its editing domain. This is Alanine--tRNA ligase from Bartonella henselae (strain ATCC 49882 / DSM 28221 / CCUG 30454 / Houston 1) (Rochalimaea henselae).